Consider the following 91-residue polypeptide: Small ribosomal subunit protein uS19 (91 aa).

This sequence belongs to the universal ribosomal protein uS19 family.

In terms of biological role, protein S19 forms a complex with S13 that binds strongly to the 16S ribosomal RNA. This chain is Small ribosomal subunit protein uS19, found in Actinobacillus pleuropneumoniae serotype 7 (strain AP76).